Reading from the N-terminus, the 154-residue chain is Protein X (154 aa).

The segment at 68 to 117 (PCALRFTSARRMETTVNAHRNLPKVLHKRTLGLSVMSTTDLEAYFKDCVF) is mitochondrial targeting sequence.

This sequence belongs to the orthohepadnavirus protein X family. As to quaternary structure, may form homodimer. May interact with host CEBPA, CFLAR, CREB1, DDB1, E4F1, HBXIP, HSPD1/HSP60, NFKBIA, POLR2E and SMAD4. Interacts with host SMC5-SMC6 complex and induces its degradation. Interacts with host TRPC4AP; leading to prevent ubiquitination of TRPC4AP. Interacts with host PLSCR1; this interaction promotes ubiquitination and degradation of HBx and impairs HBx-mediated cell proliferation. In terms of processing, a fraction may be phosphorylated in insect cells and HepG2 cells, a human hepatoblastoma cell line. Phosphorylated in vitro by host protein kinase C or mitogen-activated protein kinase. N-acetylated in insect cells.

It is found in the host cytoplasm. It localises to the host nucleus. The protein resides in the host mitochondrion. Multifunctional protein that plays a role in silencing host antiviral defenses and promoting viral transcription. Does not seem to be essential for HBV infection. May be directly involved in development of cirrhosis and liver cancer (hepatocellular carcinoma). Most of cytosolic activities involve modulation of cytosolic calcium. The effect on apoptosis is controversial depending on the cell types in which the studies have been conducted. May induce apoptosis by localizing in mitochondria and causing loss of mitochondrial membrane potential. May also modulate apoptosis by binding host CFLAR, a key regulator of the death-inducing signaling complex (DISC). Promotes viral transcription by using the host E3 ubiquitin ligase DDB1 to target the SMC5-SMC6 complex to proteasomal degradation. This host complex would otherwise bind to viral episomal DNA, and prevents its transcription. Moderately stimulates transcription of many different viral and cellular transcription elements. Promoters and enhancers stimulated by HBx contain DNA binding sites for NF-kappa-B, AP-1, AP-2, c-EBP, ATF/CREB, or the calcium-activated factor NF-AT. The sequence is that of Protein X from Hepatitis B virus genotype B1 (isolate Japan/Yamagata-2/1998) (HBV-B).